A 257-amino-acid polypeptide reads, in one-letter code: UPF0758 protein Bcenmc03_2526 (257 aa).

The segment at 1–53 (MLSPCPILPSAECRDTADTPADPPGRVIPINRRRRRPGDWRPERPRERLLERG) is disordered. Residues 37 to 51 (PGDWRPERPRERLLE) show a composition bias toward basic and acidic residues. An MPN domain is found at 135 to 257 (QIDSPGAVED…TFSFARAGWL (123 aa)). Zn(2+) is bound by residues histidine 206, histidine 208, and aspartate 219. Residues 206-219 (HNHPSGAVQPSAED) carry the JAMM motif motif.

Belongs to the UPF0758 family.

The sequence is that of UPF0758 protein Bcenmc03_2526 from Burkholderia orbicola (strain MC0-3).